The following is a 234-amino-acid chain: Ion-translocating oxidoreductase complex subunit E (234 aa).

5 helical membrane-spanning segments follow: residues 62–82, 92–112, 116–136, 151–171, and 205–225; these read LGLG…ISLF, IPIY…LMNA, TLYQ…IIIG, IWDG…LGAL, and SFLL…LLAI.

It belongs to the NqrDE/RnfAE family. In terms of assembly, the complex is composed of six subunits: RnfA, RnfB, RnfC, RnfD, RnfE and RnfG.

It localises to the cell inner membrane. Part of a membrane-bound complex that couples electron transfer with translocation of ions across the membrane. This chain is Ion-translocating oxidoreductase complex subunit E, found in Haemophilus influenzae (strain PittGG).